Consider the following 303-residue polypeptide: Cyclin-dependent kinase 1 (303 aa).

Positions 4–287 constitute a Protein kinase domain; that stretch reads YVKIEKIGEG…AREAMTHPYF (284 aa). ATP-binding positions include 10 to 18 and Lys33; that span reads IGEGTYGVV. Phosphothreonine is present on Thr14. Tyr15 carries the post-translational modification Phosphotyrosine; by wee1 and wee2. Catalysis depends on Asp128, which acts as the Proton acceptor. Thr161 carries the post-translational modification Phosphothreonine; by cak.

The protein belongs to the protein kinase superfamily. CMGC Ser/Thr protein kinase family. CDC2/CDKX subfamily. In terms of assembly, forms a stable but non-covalent complex with cyclin B in mature oocytes. Post-translationally, phosphorylation at Tyr-15 by wee1 and wee2 inhibits the protein kinase activity and acts negative regulator of entry into mitosis (G2 to M transition).

The protein resides in the nucleus. It localises to the cytoplasm. It is found in the cytoskeleton. The protein localises to the microtubule organizing center. Its subcellular location is the centrosome. It carries out the reaction L-seryl-[protein] + ATP = O-phospho-L-seryl-[protein] + ADP + H(+). The enzyme catalyses L-threonyl-[protein] + ATP = O-phospho-L-threonyl-[protein] + ADP + H(+). It catalyses the reaction [DNA-directed RNA polymerase] + ATP = phospho-[DNA-directed RNA polymerase] + ADP + H(+). Phosphorylation at Thr-14 or Tyr-15 inactivates the enzyme, while phosphorylation at Thr-161 activates it. Its function is as follows. Plays a key role in the control of the eukaryotic cell cycle by modulating the centrosome cycle as well as mitotic onset; promotes G2-M transition via association with multiple interphase cyclins. During G2 and early mitosis, CDC25A/B/C-mediated dephosphorylation activates CDK1/cyclin complexes which phosphorylate several substrates that trigger at least centrosome separation, Golgi dynamics, nuclear envelope breakdown and chromosome condensation. Once chromosomes are condensed and aligned at the metaphase plate, CDK1 activity is switched off by WEE1- and PKMYT1-mediated phosphorylation to allow sister chromatid separation, chromosome decondensation, reformation of the nuclear envelope and cytokinesis. Catalyzes lamin (LMNA, LMNB1 and LMNB2) phosphorylation at the onset of mitosis, promoting nuclear envelope breakdown. This chain is Cyclin-dependent kinase 1 (cdk1), found in Oryzias javanicus (Javanese ricefish).